The following is a 352-amino-acid chain: Molybdenum import ATP-binding protein ModC (352 aa).

Residues 1 to 229 enclose the ABC transporter domain; it reads MLELNFSQTL…SVMNPWLPKE (229 aa). An ATP-binding site is contributed by 31–38; that stretch reads GVSGAGKT. One can recognise a Mop domain in the interval 289–352; the sequence is QTSIRNVLRA…AQIKSVSITA (64 aa).

The protein belongs to the ABC transporter superfamily. Molybdate importer (TC 3.A.1.8) family. The complex is composed of two ATP-binding proteins (ModC), two transmembrane proteins (ModB) and a solute-binding protein (ModA).

It localises to the cell inner membrane. It catalyses the reaction molybdate(out) + ATP + H2O = molybdate(in) + ADP + phosphate + H(+). Its function is as follows. Part of the ABC transporter complex ModABC involved in molybdenum import. Responsible for energy coupling to the transport system. This is Molybdenum import ATP-binding protein ModC from Shigella boydii serotype 4 (strain Sb227).